A 190-amino-acid chain; its full sequence is Threonylcarbamoyl-AMP synthase (190 aa).

Residues 7–190 (TGSIAAAVDL…ALTGELFRQG (184 aa)) enclose the YrdC-like domain.

Belongs to the SUA5 family. TsaC subfamily.

It is found in the cytoplasm. It catalyses the reaction L-threonine + hydrogencarbonate + ATP = L-threonylcarbamoyladenylate + diphosphate + H2O. Functionally, required for the formation of a threonylcarbamoyl group on adenosine at position 37 (t(6)A37) in tRNAs that read codons beginning with adenine. Catalyzes the conversion of L-threonine, HCO(3)(-)/CO(2) and ATP to give threonylcarbamoyl-AMP (TC-AMP) as the acyladenylate intermediate, with the release of diphosphate. This Salmonella arizonae (strain ATCC BAA-731 / CDC346-86 / RSK2980) protein is Threonylcarbamoyl-AMP synthase.